The following is a 415-amino-acid chain: FXa-directed anticoagulant (415 aa).

Residues 1-17 (MYLKIVILVTFPLVCFT) form the signal peptide. N-linked (GlcNAc...) asparagine glycans are attached at residues Asn-117, Asn-166, Asn-216, and Asn-320.

The protein belongs to the serpin family. (Microbial infection) Interacts with Zika virus envelope protein E and Zika virus-like particles; the interaction does not affect Zika virus replication in human endothelial cells and keratinocytes. Post-translationally, the N-terminus is blocked. As to expression, female salivary gland (at protein level). Not detected in female carcass without head and salivary glands. Not detected in male tissues.

The protein localises to the secreted. In terms of biological role, anticoagulant serpin-type protein inhibiting host coagulation factor Xa (F10). Does not inhibit host thrombin (F2) and trypsin. Its function is as follows. (Microbial infection) Does not affect Zika virus replication in human endothelial cells and keratinocytes. In Aedes aegypti (Yellowfever mosquito), this protein is FXa-directed anticoagulant.